Consider the following 84-residue polypeptide: Beta-cardiotoxin CTX23 (84 aa).

Residues 1 to 21 (MKTLLLTLVVVTIVCLDLGYT) form the signal peptide. Cystine bridges form between C24–C43, C36–C61, C65–C76, and C77–C82.

It belongs to the three-finger toxin family. Short-chain subfamily. Aminergic toxin sub-subfamily. In terms of tissue distribution, expressed by the venom gland.

The protein resides in the secreted. In terms of biological role, acts as a beta-blocker by binding to beta-1 and beta-2 adrenergic receptors (ADRB1 and ADRB2). It dose-dependently decreases the heart rate (bradycardia), whereas conventional cardiotoxins increases it. At 100 mg/kg, intraperitoneal injection into mice provokes labored breathing, impaired locomotion, lack of response to external stimuli, and death (after 30 minutes). This chain is Beta-cardiotoxin CTX23, found in Ophiophagus hannah (King cobra).